The primary structure comprises 549 residues: Cation/acetate symporter ActP (549 aa).

The next 13 membrane-spanning stretches (helical) occupy residues 32–54 (IQAI…WASK), 75–97 (GMAI…LVYT), 102–124 (GLIY…AERL), 145–167 (IRIL…QMVG), 182–204 (VAVV…LATT), 211–233 (AILL…NFNF), 263–285 (ALSL…MRFF), 298–320 (FYAT…GAIL), 361–383 (AVAF…SAVS), 404–423 (VSKI…GILF), 428–450 (IAFM…ILLS), 462–484 (LVGG…TIWV), and 494–516 (YPYE…LFSI).

Belongs to the sodium:solute symporter (SSF) (TC 2.A.21) family.

It is found in the cell inner membrane. Its function is as follows. Transports acetate. This Photorhabdus laumondii subsp. laumondii (strain DSM 15139 / CIP 105565 / TT01) (Photorhabdus luminescens subsp. laumondii) protein is Cation/acetate symporter ActP.